The following is a 187-amino-acid chain: Calcium and integrin-binding family member 2 (187 aa).

3 consecutive EF-hand domains span residues 66–101 (KENP…LSEM), 103–138 (PREL…LTKE), and 144–179 (EVNL…APDF). Residues D157, D159, D161, K163, and D168 each coordinate Ca(2+).

Monomer. Homodimer. In terms of tissue distribution, enriched in central and striolar hair cells.

It localises to the cytoplasm. The protein resides in the cell projection. Its subcellular location is the stereocilium. It is found in the photoreceptor inner segment. The protein localises to the cilium. It localises to the photoreceptor outer segment. The protein resides in the cell membrane. Its subcellular location is the sarcolemma. In terms of biological role, calcium- and integrin-binding protein. Plays a role in intracellular calcium homeostasis. Critical for proper photoreceptor cell maintenance and function. Essential for development, maintenance and function of mechanosensory hair cells. The polypeptide is Calcium and integrin-binding family member 2 (Danio rerio (Zebrafish)).